The primary structure comprises 420 residues: S-adenosylmethionine synthase (420 aa).

Residue histidine 16 participates in ATP binding. Aspartate 18 contacts Mg(2+). Residue glutamate 44 coordinates K(+). Positions 57 and 100 each coordinate L-methionine. Positions 100–110 (QSADIAQGVDK) are flexible loop. ATP contacts are provided by residues 175–177 (DGK), 251–252 (KF), aspartate 260, 266–267 (RK), alanine 283, and lysine 287. Aspartate 260 is a binding site for L-methionine. Residue lysine 291 participates in L-methionine binding.

It belongs to the AdoMet synthase family. As to quaternary structure, homotetramer; dimer of dimers. The cofactor is Mg(2+). K(+) is required as a cofactor.

It localises to the cytoplasm. The enzyme catalyses L-methionine + ATP + H2O = S-adenosyl-L-methionine + phosphate + diphosphate. It functions in the pathway amino-acid biosynthesis; S-adenosyl-L-methionine biosynthesis; S-adenosyl-L-methionine from L-methionine: step 1/1. Functionally, catalyzes the formation of S-adenosylmethionine (AdoMet) from methionine and ATP. The overall synthetic reaction is composed of two sequential steps, AdoMet formation and the subsequent tripolyphosphate hydrolysis which occurs prior to release of AdoMet from the enzyme. The chain is S-adenosylmethionine synthase from Trichodesmium erythraeum (strain IMS101).